A 373-amino-acid polypeptide reads, in one-letter code: tRNA-specific 2-thiouridylase MnmA (373 aa).

Residues 12–19 (GMSGGVDS) and M38 each bind ATP. The segment at 98 to 100 (NPD) is interaction with target base in tRNA. The active-site Nucleophile is the C103. Cysteines 103 and 200 form a disulfide. ATP is bound at residue G127. The tract at residues 150–152 (KDQ) is interaction with tRNA. The Cysteine persulfide intermediate role is filled by C200. Residues 312–313 (RY) form an interaction with tRNA region.

This sequence belongs to the MnmA/TRMU family.

It localises to the cytoplasm. It carries out the reaction S-sulfanyl-L-cysteinyl-[protein] + uridine(34) in tRNA + AH2 + ATP = 2-thiouridine(34) in tRNA + L-cysteinyl-[protein] + A + AMP + diphosphate + H(+). Catalyzes the 2-thiolation of uridine at the wobble position (U34) of tRNA, leading to the formation of s(2)U34. In Streptococcus uberis (strain ATCC BAA-854 / 0140J), this protein is tRNA-specific 2-thiouridylase MnmA.